A 258-amino-acid chain; its full sequence is L-rhamnose-1-dehydrogenase (258 aa).

3 residues coordinate NADP(+): isoleucine 19, aspartate 68, and asparagine 95. Active-site proton donor residues include serine 147 and tyrosine 161. Tyrosine 161, lysine 165, isoleucine 194, and threonine 196 together coordinate NADP(+). The active-site Lowers pKa of active site Tyr is the lysine 165.

This sequence belongs to the short-chain dehydrogenases/reductases (SDR) family.

The catalysed reaction is L-rhamnofuranose + NAD(+) = L-rhamnono-1,4-lactone + NADH + H(+). Functionally, NAD-dependent dehydrogenase that has high activity with L-rhamnose and L-lyxose, and shows only low activity with L-mannose. Has no activity with NADP. Catalyzes the first step in an alternative pathway for rhamnose utilization that does not involve phosphorylated intermediates. The chain is L-rhamnose-1-dehydrogenase (DHG2) from Scheffersomyces stipitis (strain ATCC 58785 / CBS 6054 / NBRC 10063 / NRRL Y-11545) (Yeast).